Reading from the N-terminus, the 89-residue chain is Small ribosomal subunit protein uS15 (89 aa).

The protein belongs to the universal ribosomal protein uS15 family. Part of the 30S ribosomal subunit. Forms a bridge to the 50S subunit in the 70S ribosome, contacting the 23S rRNA.

Functionally, one of the primary rRNA binding proteins, it binds directly to 16S rRNA where it helps nucleate assembly of the platform of the 30S subunit by binding and bridging several RNA helices of the 16S rRNA. Forms an intersubunit bridge (bridge B4) with the 23S rRNA of the 50S subunit in the ribosome. The polypeptide is Small ribosomal subunit protein uS15 (Cereibacter sphaeroides (strain ATCC 17025 / ATH 2.4.3) (Rhodobacter sphaeroides)).